Consider the following 196-residue polypeptide: GTP cyclohydrolase 1 (196 aa).

Zn(2+) contacts are provided by Cys-85, His-88, and Cys-158.

The protein belongs to the GTP cyclohydrolase I family. In terms of assembly, homomer.

The enzyme catalyses GTP + H2O = 7,8-dihydroneopterin 3'-triphosphate + formate + H(+). It functions in the pathway cofactor biosynthesis; 7,8-dihydroneopterin triphosphate biosynthesis; 7,8-dihydroneopterin triphosphate from GTP: step 1/1. This Corynebacterium aurimucosum (strain ATCC 700975 / DSM 44827 / CIP 107346 / CN-1) (Corynebacterium nigricans) protein is GTP cyclohydrolase 1.